The following is a 209-amino-acid chain: Large ribosomal subunit protein uL3 (209 aa).

The segment at 133–152 (THGNSLSHRVPGSIGQNQTP) is disordered. Residue Q150 is modified to N5-methylglutamine.

This sequence belongs to the universal ribosomal protein uL3 family. As to quaternary structure, part of the 50S ribosomal subunit. Forms a cluster with proteins L14 and L19. Methylated by PrmB.

In terms of biological role, one of the primary rRNA binding proteins, it binds directly near the 3'-end of the 23S rRNA, where it nucleates assembly of the 50S subunit. The protein is Large ribosomal subunit protein uL3 of Shigella sonnei (strain Ss046).